The primary structure comprises 75 residues: Translational regulator CsrA (75 aa).

It belongs to the CsrA/RsmA family. As to quaternary structure, homodimer; the beta-strands of each monomer intercalate to form a hydrophobic core, while the alpha-helices form wings that extend away from the core.

The protein resides in the cytoplasm. Its function is as follows. A translational regulator that binds mRNA to regulate translation initiation and/or mRNA stability. Usually binds in the 5'-UTR at or near the Shine-Dalgarno sequence preventing ribosome-binding, thus repressing translation. Its main target seems to be the major flagellin gene, while its function is anatagonized by FliW. The chain is Translational regulator CsrA from Alkaliphilus metalliredigens (strain QYMF).